The primary structure comprises 223 residues: Protein BTG4 (223 aa).

Belongs to the BTG family. Interacts with CNOT7. Interacts with EIF4E. Interacts with CNOT8. Expressed in oocytes after germinal vesicle breakdown. Expressed in testis and in olfactory epithelium.

In terms of biological role, adapter protein that bridges CNOT7, a catalytic subunit of the CCR4-NOT complex, to EIF4E. Facilitates maternal mRNAs decay during the maturation of oocytes and in the fertilized egg, and is required for the maternal-zygotic transition (MZT), zygotic cleavage and initiation of embryonic development. The protein is Protein BTG4 (BTG4) of Homo sapiens (Human).